The chain runs to 334 residues: MNLVSLESFLDNTAFLVLLLTMFAYWVAVVFPKPWLVQGASGAMAIANLTITALLGARWLEAGYFPISNLYESLFFLAWGITAVHFIAERMSQSRFVGAVTSPIALGIVAFAALTLPVDMQQSAPLVPALKSNWLMMHVSVMMVSYATLMVGSLLAIAFLFVTRGQAVELRGSSVGTGGFRQGLVKGNNLNPVGNLNPALEGVSGNSGNVAVLEKTTSTPAITLSPQRLTLADTLDNISYRIIGLGFPLLTIGIIAGAVWANEAWGSYWSWDPKETWALITWLVFAAYLHARITKGWQGRKPAILAASGFTVVWICYLGVNLLGKGLHSYGWFL.

8 helical membrane-spanning segments follow: residues 12-32, 35-55, 67-87, 96-116, 141-161, 242-262, 277-297, and 303-323; these read NTAFLVLLLTMFAYWVAVVFP, WLVQGASGAMAIANLTITALL, ISNLYESLFFLAWGITAVHFI, FVGAVTSPIALGIVAFAALTL, VMMVSYATLMVGSLLAIAFLF, IIGLGFPLLTIGIIAGAVWAN, WALITWLVFAAYLHARITKGW, and AILAASGFTVVWICYLGVNLL.

It belongs to the CcmF/CycK/Ccl1/NrfE/CcsA family. As to quaternary structure, may interact with ccs1.

Its subcellular location is the cellular thylakoid membrane. Functionally, required during biogenesis of c-type cytochromes (cytochrome c6 and cytochrome f) at the step of heme attachment. This chain is Cytochrome c biogenesis protein CcsA, found in Synechocystis sp. (strain ATCC 27184 / PCC 6803 / Kazusa).